A 361-amino-acid chain; its full sequence is MAGNSIGQFFRVTTFGESHGSALGGIVDGVPPGIPLCEEDLQHDLDRRRPGTSRYTTQRREPDRVKILSGVFEGVTTGTSIGLLIDNTDQRSQDYSAIKDFYRPGHADYTYAQKYGRRDYRGGGRSSARETAMRVAAGAIAKKYLAQQCGVRVRGYLAQMGDIHCELKDWTQVEKNSFFCPDVDCLEALDALIHDLKKAGDSIGAGVTVVAENLPAGLGEPVFDRLDADLAHALMSINAVKGVEIGDGFAVIGKRGSENRDEITLEGFQSNHAGGILGGISSGQPVIAHLALKPTSSIMVPGRTVNRSGDAVEMVTRGRHDPCVGIRAVPIAEAMMAIVLMDHFLRQRAQCADVVAAAPIR.

R48 and R54 together coordinate NADP(+). FMN-binding positions include 125 to 127 (RSS), 238 to 239 (NA), G278, 293 to 297 (KPTSS), and R319.

Belongs to the chorismate synthase family. As to quaternary structure, homotetramer. FMNH2 serves as cofactor.

The enzyme catalyses 5-O-(1-carboxyvinyl)-3-phosphoshikimate = chorismate + phosphate. It participates in metabolic intermediate biosynthesis; chorismate biosynthesis; chorismate from D-erythrose 4-phosphate and phosphoenolpyruvate: step 7/7. Its function is as follows. Catalyzes the anti-1,4-elimination of the C-3 phosphate and the C-6 proR hydrogen from 5-enolpyruvylshikimate-3-phosphate (EPSP) to yield chorismate, which is the branch point compound that serves as the starting substrate for the three terminal pathways of aromatic amino acid biosynthesis. This reaction introduces a second double bond into the aromatic ring system. This chain is Chorismate synthase, found in Sodalis glossinidius (strain morsitans).